Reading from the N-terminus, the 505-residue chain is MDASAAAAAEIAANGVLAKLEEEREAQKRYWEEHSRDLTVEAMMLDSRAADLDKEERPEILSLLPSYEGKSVLELGAGIGRFTGELAKTAGHVLAMDFIESVIKKNESINGHYKNASFMCADVTSPDLVIEDNSIDLIFSNWLLMYLSDAEVEKLVERMVKWLKVGGHIFFRESCFHQSGDSKRKVNPTHYREPRFYTKVFKEGHAIDQSGNSSELSLLTCKCVGAYVKNKKNQNQICWLWQKVNSTEDRDFQRFLDNVQYKISGILCYERVFGQGFVSTGGIETTKEFVDLLDLKPGQKVLDVGCGIGGGDFYMAENYDVHVVGIDLSINMVSFALEHAIGRKCAVEFEVADCTTKTYPDNTFDVIYSRDTILHIQDKPALFRSFFKWLKPGGKVLISDYCRSPGKPSEEFAAYIKQRGYDLHNVETYGQMLQNAGFHDVVAEDRTDQFLKVLQRELAEVEKNKDEFLADFGQEDYDDIVTGWNAKLQRSSAGEQRWGLFIGTK.

Residues G76, R81, D97, D122, V123, and N141 each contribute to the S-adenosyl-L-homocysteine site. 5 residues coordinate phosphocholine: S174, S179, G180, R184, and Y191. N-methylethanolamine phosphate contacts are provided by residues 260 to 261 and Y269; that span reads QY. Y269 serves as a coordination point for phosphocholine. V278, S279, G305, D327, D353, C354, and R370 together coordinate S-adenosyl-L-homocysteine. Residues Y401, Y415, R419, Y421, and K487 each contribute to the phosphocholine site. N-methylethanolamine phosphate is bound by residues Y401, Y415, 419–421, and K487; that span reads RGY.

The protein belongs to the class I-like SAM-binding methyltransferase superfamily. PEAMT family.

It catalyses the reaction phosphoethanolamine + S-adenosyl-L-methionine = N-methylethanolamine phosphate + S-adenosyl-L-homocysteine + H(+). The enzyme catalyses N-methylethanolamine phosphate + S-adenosyl-L-methionine = N,N-dimethylethanolamine phosphate + S-adenosyl-L-homocysteine + H(+). It carries out the reaction N,N-dimethylethanolamine phosphate + S-adenosyl-L-methionine = phosphocholine + S-adenosyl-L-homocysteine + H(+). It functions in the pathway phospholipid metabolism; phosphatidylcholine biosynthesis; phosphocholine from phosphoethanolamine: step 1/1. Its activity is regulated as follows. Inhibited by phosphatidic acid. Involved in phosphocholine biosynthesis. Catalyzes the N-methylation of phosphoethanolamine, phosphomonomethylethanolamine and phosphodimethylethanolamine, the three methylation steps required to convert phosphoethanolamine to phosphocholine (PC). This Triticum aestivum (Wheat) protein is Phosphoethanolamine N-methyltransferase.